We begin with the raw amino-acid sequence, 184 residues long: ATP synthase subunit b, chloroplastic (184 aa).

Residues 27–49 (LATNPINLSVVLGVLIFFGKGVL) traverse the membrane as a helical segment.

It belongs to the ATPase B chain family. As to quaternary structure, F-type ATPases have 2 components, F(1) - the catalytic core - and F(0) - the membrane proton channel. F(1) has five subunits: alpha(3), beta(3), gamma(1), delta(1), epsilon(1). F(0) has four main subunits: a(1), b(1), b'(1) and c(10-14). The alpha and beta chains form an alternating ring which encloses part of the gamma chain. F(1) is attached to F(0) by a central stalk formed by the gamma and epsilon chains, while a peripheral stalk is formed by the delta, b and b' chains.

It is found in the plastid. The protein resides in the chloroplast thylakoid membrane. Functionally, f(1)F(0) ATP synthase produces ATP from ADP in the presence of a proton or sodium gradient. F-type ATPases consist of two structural domains, F(1) containing the extramembraneous catalytic core and F(0) containing the membrane proton channel, linked together by a central stalk and a peripheral stalk. During catalysis, ATP synthesis in the catalytic domain of F(1) is coupled via a rotary mechanism of the central stalk subunits to proton translocation. In terms of biological role, component of the F(0) channel, it forms part of the peripheral stalk, linking F(1) to F(0). In Solanum bulbocastanum (Wild potato), this protein is ATP synthase subunit b, chloroplastic.